Consider the following 92-residue polypeptide: Probable Fe(2+)-trafficking protein (92 aa).

This sequence belongs to the Fe(2+)-trafficking protein family.

Its function is as follows. Could be a mediator in iron transactions between iron acquisition and iron-requiring processes, such as synthesis and/or repair of Fe-S clusters in biosynthetic enzymes. The sequence is that of Probable Fe(2+)-trafficking protein from Shewanella piezotolerans (strain WP3 / JCM 13877).